The following is a 159-amino-acid chain: NADH-quinone oxidoreductase subunit B (159 aa).

4 residues coordinate [4Fe-4S] cluster: Cys-32, Cys-33, Cys-97, and Cys-126.

This sequence belongs to the complex I 20 kDa subunit family. NDH-1 is composed of 14 different subunits. Subunits NuoB, C, D, E, F, and G constitute the peripheral sector of the complex. [4Fe-4S] cluster is required as a cofactor.

It is found in the cell inner membrane. The catalysed reaction is a quinone + NADH + 5 H(+)(in) = a quinol + NAD(+) + 4 H(+)(out). NDH-1 shuttles electrons from NADH, via FMN and iron-sulfur (Fe-S) centers, to quinones in the respiratory chain. The immediate electron acceptor for the enzyme in this species is believed to be ubiquinone. Couples the redox reaction to proton translocation (for every two electrons transferred, four hydrogen ions are translocated across the cytoplasmic membrane), and thus conserves the redox energy in a proton gradient. In Helicobacter pylori (strain P12), this protein is NADH-quinone oxidoreductase subunit B.